We begin with the raw amino-acid sequence, 153 residues long: Ubiquitin/ISG15-conjugating enzyme E2 L6 (153 aa).

In terms of domain architecture, UBC core spans 2 to 149; the sequence is TASKRVAKEL…AEEFTLQYGV (148 aa). The Glycyl thioester intermediate role is filled by cysteine 86.

This sequence belongs to the ubiquitin-conjugating enzyme family. In terms of assembly, interacts with RNF19A, RNF19B and RNF144B. Interacts with FLT3 (tyrosine phosphorylated). In terms of processing, ISGylated.

It catalyses the reaction S-ubiquitinyl-[E1 ubiquitin-activating enzyme]-L-cysteine + [E2 ubiquitin-conjugating enzyme]-L-cysteine = [E1 ubiquitin-activating enzyme]-L-cysteine + S-ubiquitinyl-[E2 ubiquitin-conjugating enzyme]-L-cysteine.. The protein operates within protein modification; protein ubiquitination. In terms of biological role, catalyzes the covalent attachment of ubiquitin to other proteins. Functions in the E6/E6-AP-induced ubiquitination of p53/TP53. Promotes ubiquitination and subsequent proteasomal degradation of FLT3. The polypeptide is Ubiquitin/ISG15-conjugating enzyme E2 L6 (Ube2l6) (Rattus norvegicus (Rat)).